Here is a 107-residue protein sequence, read N- to C-terminus: Ribonuclease P protein component 4 (107 aa).

Zn(2+) is bound by residues cysteine 66, cysteine 69, cysteine 92, and cysteine 95.

It belongs to the eukaryotic/archaeal RNase P protein component 4 family. In terms of assembly, consists of a catalytic RNA component and at least 4-5 protein subunits. It depends on Zn(2+) as a cofactor.

It is found in the cytoplasm. It catalyses the reaction Endonucleolytic cleavage of RNA, removing 5'-extranucleotides from tRNA precursor.. Its function is as follows. Part of ribonuclease P, a protein complex that generates mature tRNA molecules by cleaving their 5'-ends. This is Ribonuclease P protein component 4 from Methanosarcina mazei (strain ATCC BAA-159 / DSM 3647 / Goe1 / Go1 / JCM 11833 / OCM 88) (Methanosarcina frisia).